We begin with the raw amino-acid sequence, 283 residues long: MASARDLRRRIKSVKSTQQITKAMKMVAAAKLRRAQEAVEAARPFALKIKDVLSRVAAASGGASHPLLEEREVKTIAYVIITADRGLCGGFNANILRRAASEVRDVNNPAIVAVGTKSRDYFTRRGYDITASYVRLGEAIQFSQAKEIARFVIDKYVAGEFDEVHLVFSEFVNILTQRPVKVKLLPVETPTEEKKGPQVEYIFEPSAEAVLAELLPTYVETTVFRAMLEAKAGEQGARMTAMDSATKNAKELINKLTLSLNRARQAAITKEISEIVGGAAALE.

It belongs to the ATPase gamma chain family. In terms of assembly, F-type ATPases have 2 components, CF(1) - the catalytic core - and CF(0) - the membrane proton channel. CF(1) has five subunits: alpha(3), beta(3), gamma(1), delta(1), epsilon(1). CF(0) has three main subunits: a, b and c.

The protein resides in the cell membrane. In terms of biological role, produces ATP from ADP in the presence of a proton gradient across the membrane. The gamma chain is believed to be important in regulating ATPase activity and the flow of protons through the CF(0) complex. The protein is ATP synthase gamma chain of Desulforamulus reducens (strain ATCC BAA-1160 / DSM 100696 / MI-1) (Desulfotomaculum reducens).